The following is a 283-amino-acid chain: uncharacterized protein (283 aa).

Helical transmembrane passes span 8 to 28 (LILS…IGYV), 38 to 58 (GIHS…VKIA), 73 to 93 (FECL…YEIG), 100 to 120 (IIYG…ILSI), and 175 to 195 (AIAG…ICLT).

It belongs to the cation diffusion facilitator (CDF) transporter (TC 2.A.4) family.

Its subcellular location is the cell membrane. This is an uncharacterized protein from Methanocaldococcus jannaschii (strain ATCC 43067 / DSM 2661 / JAL-1 / JCM 10045 / NBRC 100440) (Methanococcus jannaschii).